A 63-amino-acid polypeptide reads, in one-letter code: Lantibiotic mutacin-1140 (63 aa).

The propeptide occupies 1-41 (MSNTQLLEVLGTETFDVQEDLFAFDTTDTTIVASNDDPDTR). Positions 44–48 (SWSLC) form a cross-link, lanthionine (Ser-Cys). S46 carries the 2,3-didehydroalanine (Ser) modification. The segment at residues 49–52 (TPGC) is a cross-link (beta-methyllanthionine (Thr-Cys)). At T55 the chain carries 2,3-didehydrobutyrine. A cross-link (lanthionine (Ser-Cys)) is located at residues 57–62 (SFNSYC). Positions 60-63 (SYCC) form a cross-link, S-(2-aminovinyl)-D-cysteine (Ser-Cys).

Belongs to the type A lantibiotic family. Post-translationally, maturation of lantibiotics involves the enzymatic conversion of Thr, and Ser into dehydrated AA and the formation of thioether bonds with cysteine. The C-terminal lanthionine undergoes decarboxylation. This is followed by membrane translocation and cleavage of the modified precursor. In terms of processing, the structure of the 2,3-didehydrobutyrine is not discussed in PubMed:11082191.

Its function is as follows. Lanthionine-containing peptide antibiotic (lantibiotic) active on Gram-positive bacteria. The bactericidal activity of lantibiotics is based on depolarization of energized bacterial cytoplasmic membranes, initiated by the formation of aqueous transmembrane pores. This is Lantibiotic mutacin-1140 (lanA) from Streptococcus mutans.